An 892-amino-acid chain; its full sequence is Alanine--tRNA ligase (892 aa).

Zn(2+)-binding residues include H574, H578, C676, and H680.

It belongs to the class-II aminoacyl-tRNA synthetase family. It depends on Zn(2+) as a cofactor.

The protein localises to the cytoplasm. The catalysed reaction is tRNA(Ala) + L-alanine + ATP = L-alanyl-tRNA(Ala) + AMP + diphosphate. In terms of biological role, catalyzes the attachment of alanine to tRNA(Ala) in a two-step reaction: alanine is first activated by ATP to form Ala-AMP and then transferred to the acceptor end of tRNA(Ala). Also edits incorrectly charged Ser-tRNA(Ala) and Gly-tRNA(Ala) via its editing domain. This is Alanine--tRNA ligase from Prochlorococcus marinus (strain SARG / CCMP1375 / SS120).